A 100-amino-acid chain; its full sequence is uncharacterized protein (100 aa).

The tract at residues 78–100 (NNGNLDFKGRADERRQPVSNLRM) is disordered. Basic and acidic residues predominate over residues 84-93 (FKGRADERRQ).

This is an uncharacterized protein from Saccharomyces cerevisiae (strain ATCC 204508 / S288c) (Baker's yeast).